The primary structure comprises 229 residues: Acidic leucine-rich nuclear phosphoprotein 32-related protein 1 (229 aa).

LRR repeat units lie at residues T19–L40, N42–P63, A64–V85, and D90–K110. In terms of domain architecture, LRRCT spans P124–G164. Residues E155–G177 show a composition bias toward acidic residues. The tract at residues E155–E229 is disordered. Positions P219 to E229 are enriched in basic and acidic residues.

This sequence belongs to the ANP32 family.

The protein is Acidic leucine-rich nuclear phosphoprotein 32-related protein 1 of Caenorhabditis elegans.